Reading from the N-terminus, the 760-residue chain is Prolyl endopeptidase FAP (760 aa).

Residues 1-4 (MKTW) lie on the Cytoplasmic side of the membrane. The helical; Signal-anchor for type II membrane protein transmembrane segment at 5-25 (LKIVFGVATSAVLALLVMCIV) threads the bilayer. At 26 to 760 (LRPSRVHNSE…FLKQCFSLSD (735 aa)) the chain is on the extracellular side. 3 N-linked (GlcNAc...) asparagine glycosylation sites follow: Asn49, Asn92, and Asn99. Substrate contacts are provided by Glu203 and Glu204. Asn227 and Asn314 each carry an N-linked (GlcNAc...) asparagine glycan. Intrachain disulfides connect Cys321–Cys332, Cys438–Cys441, and Cys448–Cys466. Residues 481–512 (TDQEIKILEDNKELENALKNIQLPKEEIKKLK) are a coiled coil. Ser624 functions as the Charge relay system in the catalytic mechanism. A disulfide bridge links Cys643 with Cys755. The N-linked (GlcNAc...) asparagine glycan is linked to Asn679. Residues Asp702 and His734 each act as charge relay system in the active site.

The protein belongs to the peptidase S9B family. As to quaternary structure, homodimer; homodimerization is required for activity of both plasma membrane and soluble forms. The monomer is inactive. Heterodimer with DPP4. Interacts with PLAUR; the interaction occurs at the cell surface of invadopodia membranes. Interacts with ITGB1. Interacts with ITGA3. Associates with integrin alpha-3/beta-1; the association occurs in a collagen-dependent manner at the cell surface of invadopodia membranes. Post-translationally, N-glycosylated. The N-terminus may be blocked.

Its subcellular location is the cell surface. The protein localises to the cell membrane. It is found in the cell projection. The protein resides in the lamellipodium membrane. It localises to the invadopodium membrane. Its subcellular location is the ruffle membrane. The protein localises to the membrane. It is found in the secreted. It catalyses the reaction Release of an N-terminal dipeptide, Xaa-Yaa-|-Zaa-, from a polypeptide, preferentially when Yaa is Pro, provided Zaa is neither Pro nor hydroxyproline.. It carries out the reaction Hydrolysis of Pro-|-Xaa &gt;&gt; Ala-|-Xaa in oligopeptides.. Gelatinase activity is inhibited by serine-protease inhibitors, such as phenylmethylsulfonyl fluoride (PMSF), 4-(2-aminoethyl)-benzenesulfonyl fluoride hydrochloride (AEBSF), 4-amidino phenylsulfonyl fluoride (APSF) and diisopropyl fluorophosphate (DFP), N-ethylmaleimide (NEM) and phenylmethylsulfonyl fluoride (PMSF). Dipeptidyl peptidase activity is inhibited by 2,2'-azino-bis(3-ethylbenzthiazoline-6-sulfonic acid), diisopropylfluorophosphate (DFP). Prolyl endopeptidase activity is inhibited by the boronic acid peptide Ac-Gly-BoroPro, Ac-Gly-Pro-chloromethyl ketone and Thr-Ser-Gly-chloromethyl ketone. Its function is as follows. Cell surface glycoprotein serine protease that participates in extracellular matrix degradation and involved in many cellular processes including tissue remodeling, fibrosis, wound healing, inflammation and tumor growth. Both plasma membrane and soluble forms exhibit post-proline cleaving endopeptidase activity, with a marked preference for Ala/Ser-Gly-Pro-Ser/Asn/Ala consensus sequences, on substrate such as alpha-2-antiplasmin SERPINF2 and SPRY2. Degrade also gelatin, heat-denatured type I collagen, but not native collagen type I and IV, vibronectin, tenascin, laminin, fibronectin, fibrin or casein. Also has dipeptidyl peptidase activity, exhibiting the ability to hydrolyze the prolyl bond two residues from the N-terminus of synthetic dipeptide substrates provided that the penultimate residue is proline, with a preference for Ala-Pro, Ile-Pro, Gly-Pro, Arg-Pro and Pro-Pro. Natural neuropeptide hormones for dipeptidyl peptidase are the neuropeptide Y (NPY), peptide YY (PYY), substance P (TAC1) and brain natriuretic peptide 32 (NPPB). The plasma membrane form, in association with either DPP4, PLAUR or integrins, is involved in the pericellular proteolysis of the extracellular matrix (ECM), and hence promotes cell adhesion, migration and invasion through the ECM. Plays a role in tissue remodeling during development and wound healing. Participates in the cell invasiveness towards the ECM in malignant melanoma cancers. Enhances tumor growth progression by increasing angiogenesis, collagen fiber degradation and apoptosis and by reducing antitumor response of the immune system. Promotes glioma cell invasion through the brain parenchyma by degrading the proteoglycan brevican. Acts as a tumor suppressor in melanocytic cells through regulation of cell proliferation and survival in a serine protease activity-independent manner. The chain is Prolyl endopeptidase FAP from Bos taurus (Bovine).